A 377-amino-acid chain; its full sequence is Chaperone protein DnaJ (377 aa).

In terms of domain architecture, J spans 5 to 70 (DYYEVLGVAK…QKRAAYDRYG (66 aa)). The segment at 137–215 (GFDTEIRVPS…CDGVGRTRRN (79 aa)) adopts a CR-type zinc-finger fold. Zn(2+) contacts are provided by Cys150, Cys153, Cys167, Cys170, Cys189, Cys192, Cys203, and Cys206. CXXCXGXG motif repeat units lie at residues 150–157 (CDTCHGSG), 167–174 (CRTCGGSG), 189–196 (CPTCHGTG), and 203–210 (CPSCDGVG).

This sequence belongs to the DnaJ family. In terms of assembly, homodimer. Zn(2+) serves as cofactor.

The protein resides in the cytoplasm. In terms of biological role, participates actively in the response to hyperosmotic and heat shock by preventing the aggregation of stress-denatured proteins and by disaggregating proteins, also in an autonomous, DnaK-independent fashion. Unfolded proteins bind initially to DnaJ; upon interaction with the DnaJ-bound protein, DnaK hydrolyzes its bound ATP, resulting in the formation of a stable complex. GrpE releases ADP from DnaK; ATP binding to DnaK triggers the release of the substrate protein, thus completing the reaction cycle. Several rounds of ATP-dependent interactions between DnaJ, DnaK and GrpE are required for fully efficient folding. Also involved, together with DnaK and GrpE, in the DNA replication of plasmids through activation of initiation proteins. The protein is Chaperone protein DnaJ of Bordetella parapertussis (strain 12822 / ATCC BAA-587 / NCTC 13253).